Consider the following 79-residue polypeptide: Cytochrome b (79 aa).

Transmembrane regions (helical) follow at residues Thr-1–Ala-7, Trp-31–Ile-52, and Trp-67–Ala-79. Heme b is bound by residues His-37 and His-51.

The protein belongs to the cytochrome b family. In terms of assembly, the cytochrome bc1 complex contains 11 subunits: 3 respiratory subunits (MT-CYB, CYC1 and UQCRFS1), 2 core proteins (UQCRC1 and UQCRC2) and 6 low-molecular weight proteins (UQCRH/QCR6, UQCRB/QCR7, UQCRQ/QCR8, UQCR10/QCR9, UQCR11/QCR10 and a cleavage product of UQCRFS1). This cytochrome bc1 complex then forms a dimer. Heme b serves as cofactor.

The protein resides in the mitochondrion inner membrane. Component of the ubiquinol-cytochrome c reductase complex (complex III or cytochrome b-c1 complex) that is part of the mitochondrial respiratory chain. The b-c1 complex mediates electron transfer from ubiquinol to cytochrome c. Contributes to the generation of a proton gradient across the mitochondrial membrane that is then used for ATP synthesis. This chain is Cytochrome b (MT-CYB), found in Pomatostomus superciliosus (White-browed babbler).